A 356-amino-acid polypeptide reads, in one-letter code: Malate dehydrogenase, glyoxysomal (356 aa).

Residues 1–36 (MQPIPDVNQRIARISAHLHPPKSQMEESSALRRANC) constitute a glyoxysome transit peptide. Residues 51–57 (GAAGGIG) and aspartate 77 each bind NAD(+). Residues arginine 124 and arginine 130 each coordinate substrate. NAD(+) contacts are provided by residues asparagine 137 and 160–162 (ISN). Asparagine 162 and arginine 196 together coordinate substrate. Catalysis depends on histidine 220, which acts as the Proton acceptor. Residue methionine 271 coordinates NAD(+).

It belongs to the LDH/MDH superfamily. MDH type 1 family. Homodimer.

Its subcellular location is the glyoxysome. It catalyses the reaction (S)-malate + NAD(+) = oxaloacetate + NADH + H(+). The sequence is that of Malate dehydrogenase, glyoxysomal from Citrullus lanatus (Watermelon).